Reading from the N-terminus, the 216-residue chain is MVEITAAELEAAEKIFGERLDLAKRYVEHLATSGTERGLIGPREIPRLWSRHVLNCAVIESAIAMDSHVADVGSGAGLPGLCLAIARPDLELTLIEPLERRVIWLQEVVDDLGLDNVTIMRTRAELAVGMVDADVVTARAVSALSNLAGLTIPLLNGHGEVVAIKGRSAAEEIEKAKKVIRKLGGVETSVVVCGQELLEEPTTVVRIIVNKPGKTA.

Residues Gly73, Leu78, 124–125, and Arg139 contribute to the S-adenosyl-L-methionine site; that span reads AE.

Belongs to the methyltransferase superfamily. RNA methyltransferase RsmG family.

The protein localises to the cytoplasm. Its function is as follows. Specifically methylates the N7 position of guanine in position 518 of 16S rRNA. The sequence is that of Ribosomal RNA small subunit methyltransferase G from Paenarthrobacter aurescens (strain TC1).